Consider the following 477-residue polypeptide: Cytochrome c-552 (477 aa).

Positions 1 to 26 are cleaved as a signal peptide; it reads MVRISTSISYLWGMVASLFLMMPAYS. Heme c is bound at residue His94. Heme is bound by residues Cys122, Cys125, and Lys126. 6 residues coordinate heme c: Cys160, Cys163, His164, Cys209, Cys212, and His213. Glu215, Tyr216, Lys261, and Gln263 together coordinate Ca(2+). Tyr216 lines the substrate pocket. His264 lines the substrate pocket. Heme c-binding residues include His275, Cys282, Cys285, His286, His301, Cys314, Cys317, His318, and His393.

The protein belongs to the cytochrome c-552 family. It depends on Ca(2+) as a cofactor. The cofactor is heme c.

Its subcellular location is the periplasm. The enzyme catalyses 6 Fe(III)-[cytochrome c] + NH4(+) + 2 H2O = 6 Fe(II)-[cytochrome c] + nitrite + 8 H(+). Its pathway is nitrogen metabolism; nitrate reduction (assimilation). Catalyzes the reduction of nitrite to ammonia, consuming six electrons in the process. The polypeptide is Cytochrome c-552 (Pectobacterium carotovorum subsp. carotovorum (strain PC1)).